Reading from the N-terminus, the 461-residue chain is Juvenile hormone epoxide hydrolase (461 aa).

A helical membrane pass occupies residues 4 to 24 (LLFIALPLLVLASIPLYLLVL). Catalysis depends on aspartate 227, which acts as the Nucleophile. The Proton donor role is filled by tyrosine 373. Catalysis depends on histidine 430, which acts as the Proton acceptor.

The protein belongs to the peptidase S33 family. In terms of assembly, homodimer. In terms of tissue distribution, expressed in fat body, foregut and midgut but not in brain, subesophageal ganglia or silk gland of larvae on day 1 of fifth instar.

Its subcellular location is the microsome membrane. The protein localises to the endoplasmic reticulum membrane. The enzyme catalyses cis-stilbene oxide + H2O = (1R,2R)-hydrobenzoin. It catalyses the reaction 1-(4-methoxyphenyl)-N-methyl-N-[(3-methyloxetan-3-yl)methyl]methanamine + H2O = 2-{[(4-methoxybenzyl)(methyl)amino]methyl}-2-methylpropane-1,3-diol. Catalyzes juvenile hormone hydrolysis. Degrades juvenile hormone III (JH III) about 3 times and 5 times slower than juvenile hormone I (JH I) and II (JH II), respectively. Degrades cis-stilbene oxide and trans-stilbene oxide about 18 and 43 times slower than JH III, respectively. This Bombyx mori (Silk moth) protein is Juvenile hormone epoxide hydrolase.